Here is a 506-residue protein sequence, read N- to C-terminus: Glucosidase 2 subunit beta (506 aa).

An N-terminal signal peptide occupies residues 1-23; sequence MKFSQWYTLTAPLLISSLYTVNA. A disulfide bridge links Cys86 with Cys108. 2 coiled-coil regions span residues 172 to 243 and 338 to 374; these read SLVA…LYET and ESYR…LEYH. One can recognise an MRH domain in the interval 279 to 474; the sequence is ESCNNHLSML…KMKSPAACSP (196 aa). Cystine bridges form between Cys431–Cys460 and Cys445–Cys472. An ER retrieval sequence motif is present at residues 503–506; the sequence is VDEL.

Heterodimer of a catalytic subunit alpha (gls2) and a subunit beta (gtb1).

It is found in the endoplasmic reticulum. Functionally, subunit of glucosidase 2, which cleaves sequentially the 2 innermost alpha-1,3-linked glucose residues from the Glc(2)Man(9)GlcNAc(2) oligosaccharide precursor of immature glycoproteins in the endoplasmic reticulum (ER). Specifically required for the cleavage of the final glucose. The subunit beta retains the catalytic subunit alpha in the ER. The chain is Glucosidase 2 subunit beta (gtb1) from Schizosaccharomyces pombe (strain 972 / ATCC 24843) (Fission yeast).